A 314-amino-acid polypeptide reads, in one-letter code: Olfactory receptor 9A1 (314 aa).

The Extracellular segment spans residues 1-24 (MLGNYSSATEFFLLGFPGSQEVCR). A glycan (N-linked (GlcNAc...) asparagine) is linked at Asn4. A helical membrane pass occupies residues 25–45 (ILFATFFLLYAVTVMGNVVII). At 46–64 (ITVCVDKCLQSPIYFFLGH) the chain is on the cytoplasmic side. The chain crosses the membrane as a helical span at residues 65-85 (LCVLEILITSTAVPFMLWGLL). At 86-99 (LPSTQIMSLTACAA) the chain is on the extracellular side. Cys97 and Cys179 are joined by a disulfide. The helical transmembrane segment at 100-120 (QLYLYLSLGTLELALMGVMAV) threads the bilayer. Topologically, residues 121-140 (DRYVAVCNPLRYNIIMNSST) are cytoplasmic. Residues 141-161 (FIWVIIVSWVLGFLSEIWPVY) traverse the membrane as a helical segment. The Extracellular portion of the chain corresponds to 162-196 (ATFQLTFCKSSVLDHFYCDRGQLLKVSCEDTLFRE). The chain crosses the membrane as a helical span at residues 197 to 217 (FILFLMAVFIIIGSLIPTIVS). Topologically, residues 218–239 (YTYIISTNLKIPSASGWRKSFS) are cytoplasmic. The chain crosses the membrane as a helical span at residues 240 to 260 (TCASHFTYVVIGYGSCLFLYV). Topologically, residues 261–271 (KPKQTQAAEYN) are extracellular. A helical transmembrane segment spans residues 272–292 (RVVSLLVLVVTPFLNPFIFTL). Topologically, residues 293–314 (RNDKFIQAFGDGMKHCYKLLKN) are cytoplasmic.

Belongs to the G-protein coupled receptor 1 family.

It localises to the cell membrane. Odorant receptor. This is Olfactory receptor 9A1 (OR9A1P) from Homo sapiens (Human).